The sequence spans 1028 residues: Contactin-3 (1028 aa).

A signal peptide spans 1–19; that stretch reads MMFPWKQLILLSFIGCLGG. Ig-like C2-type domains lie at 26–117, 122–208, 227–313, 318–402, 408–497, and 499–593; these read PVFI…AKLQ, ENFK…ARVL, PKIE…GRLT, PHWV…AELK, PDFS…LVVT, and PTRI…ADLI. 5 disulfide bridges follow: C50–C100, C144–C196, C249–C297, C339–C386, and C431–C479. N65 and N193 each carry an N-linked (GlcNAc...) asparagine glycan. N-linked (GlcNAc...) asparagine glycans are attached at residues N375, N468, and N489. A disulfide bridge links C521 with C577. Fibronectin type-III domains are found at residues 600 to 698, 703 to 800, 805 to 901, and 902 to 998; these read PPEN…TEEA, PPSE…SAEE, APSQ…TKKT, and PPSQ…TSMD. A disordered region spans residues 684–713; the sequence is GEPSLPSEKVRTEEAVPEVPPSEVNGGGGS. Residues N765, N860, N895, N913, N931, and N956 are each glycosylated (N-linked (GlcNAc...) asparagine). S1002 carries GPI-anchor amidated serine lipidation. Residues 1003-1028 constitute a propeptide, removed in mature form; that stretch reads TSAISNVHPMSSYMPIVLFLIVYVLW.

This sequence belongs to the immunoglobulin superfamily. Contactin family. In terms of assembly, interacts with PTPRG. In terms of tissue distribution, in brain, it is expressed in frontal lobe, occipital lobe, cerebellum and amygdala.

It localises to the cell membrane. In terms of biological role, contactins mediate cell surface interactions during nervous system development. Has some neurite outgrowth-promoting activity. This Homo sapiens (Human) protein is Contactin-3 (CNTN3).